Consider the following 1353-residue polypeptide: Xanthine dehydrogenase 2 (1353 aa).

The region spanning 7–93 (MEAIMYVNGV…GMHVISIEGV (87 aa)) is the 2Fe-2S ferredoxin-type domain. 8 residues coordinate [2Fe-2S] cluster: C45, C50, C53, C75, C115, C118, C151, and C153. Residues 249 to 434 (GGNEGITWYR…LSVFLPWTRP (186 aa)) enclose the FAD-binding PCMH-type domain. FAD contacts are provided by residues 277-284 (LLVGNTEV), F357, 367-371 (CIGGN), D380, L424, and K442. Mo-molybdopterin-binding residues include Q788 and F819. Substrate-binding residues include E823 and R901. R933 is a binding site for Mo-molybdopterin. F935 and T1031 together coordinate substrate. Position 1100 (A1100) interacts with Mo-molybdopterin. E1289 (proton acceptor) is an active-site residue.

Belongs to the xanthine dehydrogenase family. As to quaternary structure, homodimer. It depends on [2Fe-2S] cluster as a cofactor. The cofactor is FAD. Requires Mo-molybdopterin as cofactor. In terms of tissue distribution, expressed in roots, leaves, stems, flowers and siliques.

The enzyme catalyses xanthine + NAD(+) + H2O = urate + NADH + H(+). The catalysed reaction is hypoxanthine + NAD(+) + H2O = xanthine + NADH + H(+). In terms of biological role, key enzyme involved in purine catabolism. Catalyzes the oxidation of hypoxanthine to xanthine and the oxidation of xanthine to urate. Regulates the level of ureides and plays a role during plant growth and development and senescence. This Arabidopsis thaliana (Mouse-ear cress) protein is Xanthine dehydrogenase 2 (XDH2).